The sequence spans 299 residues: MKFSTFVSLGLTAITALAAPTPSMIDVKRDVVKRAASLEDVATAERPLRCRPSASLPPPSRVTRLPLFSSLVLSRALATTSRSAATSPSSDRTARSCLRTSPSPSRVSRMLSFVTLPSRRSSVAMLSPSRRYELVTPKEITTYLHRLQSENVWVDHLDLSSDRDHDKDYYDGLLDITHAADFVTVTNTFLHDHWKASLIGHSDSNGAEDKGHLTVTYANNYLKNLNSRGRPSASAQATSTTTTTRTCRMVSTPARVRSCLFRTTFLSAPRRLFTRLMLDMLLSLATTSVMARTLPRRVL.

An N-terminal signal peptide occupies residues 1–18 (MKFSTFVSLGLTAITALA). Composition is skewed to low complexity over residues 82–91 (RSAATSPSSD) and 232–246 (SASA…TTRT). 2 disordered regions span residues 82–105 (RSAA…PSPS) and 227–246 (SRGR…TTRT).

The protein belongs to the polysaccharide lyase 1 family.

The protein localises to the secreted. The enzyme catalyses Eliminative cleavage of (1-&gt;4)-alpha-D-galacturonan methyl ester to give oligosaccharides with 4-deoxy-6-O-methyl-alpha-D-galact-4-enuronosyl groups at their non-reducing ends.. The polypeptide is Pectin lyase (PELA) (Peyronellaea pinodes (Pea foot rot fungus)).